The chain runs to 462 residues: Cysteine--tRNA ligase (462 aa).

Zn(2+) is bound at residue C29. Residues 31–41 (PTVYDHAHIGN) carry the 'HIGH' region motif. Residues C214, H239, and E243 each coordinate Zn(2+). The short motif at 272-276 (KMSKS) is the 'KMSKS' region element. K275 is an ATP binding site.

This sequence belongs to the class-I aminoacyl-tRNA synthetase family. Monomer. It depends on Zn(2+) as a cofactor.

The protein resides in the cytoplasm. The enzyme catalyses tRNA(Cys) + L-cysteine + ATP = L-cysteinyl-tRNA(Cys) + AMP + diphosphate. This is Cysteine--tRNA ligase from Xanthobacter autotrophicus (strain ATCC BAA-1158 / Py2).